The chain runs to 248 residues: Probable transcriptional regulator LumQ (248 aa).

Residues Val-148–Phe-246 form the HTH araC/xylS-type domain. 2 consecutive DNA-binding regions (H-T-H motif) follow at residues Ala-165–Met-186 and Leu-213–Tyr-236.

In terms of biological role, probable transcriptional regulator. Its target gene(s) is not yet known. In Photobacterium leiognathi, this protein is Probable transcriptional regulator LumQ (lumQ).